We begin with the raw amino-acid sequence, 1306 residues long: Kinesin-like protein KIN-14L (1306 aa).

A Kinesin motor domain is found at Asn-142 to Ala-456. Residue Gly-223–Thr-230 participates in ATP binding. Coiled coils occupy residues Ile-466 to Gln-507 and His-540 to Ser-595. 2 stretches are compositionally biased toward polar residues: residues Ala-592–Ser-611 and Leu-660–Gln-677. 3 disordered regions span residues Ala-592 to Lys-627, Lys-657 to Ile-710, and Lys-849 to Leu-881. Residues Ser-855–Ser-867 show a composition bias toward low complexity.

The protein belongs to the TRAFAC class myosin-kinesin ATPase superfamily. Kinesin family. KIN-14 subfamily.

This chain is Kinesin-like protein KIN-14L, found in Oryza sativa subsp. japonica (Rice).